A 441-amino-acid chain; its full sequence is Leucine-rich repeat-containing protein 17 (441 aa).

An N-terminal signal peptide occupies residues methionine 1–leucine 18. LRR repeat units follow at residues aspartate 82 to lysine 103, lysine 106 to glycine 127, and lysine 130 to tyrosine 151. The LRRCT 1 domain maps to asparagine 163–glutamate 214. In terms of domain architecture, LRRNT spans glutamine 225–proline 268. LRR repeat units follow at residues aspartate 269–aspartate 290, glutamate 293–glycine 314, and histidine 317–tyrosine 340. The LRRCT 2 domain maps to asparagine 350–lysine 402.

In terms of tissue distribution, expressed in osteoblast cell lines. Well expressed in ovary, heart, pancreas, skeletal muscle, lung, and fetal kidney and lung and only at the basal levels in the other tissues examined including adult kidney. More expressed in S-type neuroblastoma cells than in N-type neuroblastoma cells.

It is found in the secreted. The protein localises to the extracellular space. Its function is as follows. Involved in bone homeostasis. Acts as a negative regulator of RANKL-induced osteoclast precursor differentiation from bone marrow precursors. The sequence is that of Leucine-rich repeat-containing protein 17 (LRRC17) from Homo sapiens (Human).